The chain runs to 257 residues: uncharacterized protein (257 aa).

The signal sequence occupies residues 1 to 26 (MKKAFILSAAAAVGLFTFGGVQQASA). Positions 80-135 (AKQSNVKVQDVQKTETAKPAQKTTEKAAADQNTASKAPATAEKTNTTTSAPSSVSA) are disordered. Residues 121 to 134 (EKTNTTTSAPSSVS) are compositionally biased toward polar residues. An SCP domain is found at 141–254 (VELTNAERQK…ESGSIWTQQF (114 aa)).

This is an uncharacterized protein from Bacillus subtilis (strain 168).